A 404-amino-acid chain; its full sequence is Multidrug resistance protein MdtG (404 aa).

11 consecutive transmembrane segments (helical) span residues 19 to 39 (LGCFLTGAAFSLVMPFLPLYV), 56 to 76 (LVFSITFLFSAIASPFWGGLA), 90 to 110 (LGMAIVMLLMGMAQNIWQFLI), 113 to 133 (ALLGLLGGFIPNANALIATQV), 144 to 164 (TLSTGGVSGALLGPLAGGLLA), 171 to 191 (PVFFITASVLFICFLLTFFFI), 222 to 242 (LFVTTLIIQVATGSIAPILTL), 254 to 274 (IAFISGMIASVPGVAALLSAP), 288 to 308 (ILIVALIISVLLLIPMSFVQT), 317 to 337 (FLLGAADGALLPAVQTLLVYN), and 376 to 396 (AVFCVTAGVVLFNAIYSWNSL).

Belongs to the major facilitator superfamily. DHA1 family. MdtG (TC 2.A.1.2.20) subfamily.

The protein localises to the cell inner membrane. This Salmonella typhimurium (strain LT2 / SGSC1412 / ATCC 700720) protein is Multidrug resistance protein MdtG.